A 1398-amino-acid chain; its full sequence is Disease resistance protein RPV1 (1398 aa).

Residues 22–185 (TTYDVFLSFR…EITNSIFRQL (164 aa)) form the TIR domain. Residues 31–36 (RGEDTR) and Gly-63 each bind NAD(+). Glu-97 is an active-site residue. An NB-ARC domain is found at 201–440 (SHVKEMILRL…KRSYDGLDRI (240 aa)). LRR repeat units lie at residues 203–225 (VKEM…IYGV), 423–447 (KADI…IFLD), 478–504 (LNDL…GWEI), 535–560 (IKSV…VFAK), 610–632 (SYEL…NFDG), 633–657 (GKLV…DLER), 678–702 (MPNL…VGNM), 703–726 (KKLT…IGDL), 728–750 (SLES…GGNM), 751–773 (KSLT…IGDL), 775–797 (SLES…GGNM), 798–820 (KSLT…IGDL), 822–844 (SLEI…GGNM), 845–867 (KSLK…IGDL), 869–891 (SLKY…GGNM), 892–914 (KRLL…IGDL), 916–938 (SLKY…GGNM), 939–961 (KSLT…IGDL), 963–985 (SLEI…GGNM), 986–1008 (KSLK…IGDL), 1010–1032 (SLKY…GGNM), 1033–1055 (KSLL…IGDL), 1079–1102 (MKSL…IGDL), and 1105–1128 (LEML…AIDA). A compositionally biased stretch (polar residues) spans 1315-1328 (QNSGDNGSALQDAN). Residues 1315-1336 (QNSGDNGSALQDANGNVHGANQ) are disordered. Residues 1346–1369 (LDLLRNLSLGDNGSVVLEDTLGNR) form an LRR 25 repeat. The Nuclear localization signal motif lies at 1369–1373 (RKRRR).

Belongs to the disease resistance TIR-NB-LRR family. Homodimer; homodimerization is required for NAD(+) hydrolase (NADase) activity.

The protein resides in the nucleus. Its subcellular location is the cytoplasm. It catalyses the reaction NAD(+) + H2O = ADP-D-ribose + nicotinamide + H(+). Its function is as follows. Disease resistance (R) protein that confers resistance to multiple powdery and downy mildew by promoting cell death. Acts as a NAD(+) hydrolase (NADase): in response to activation, catalyzes cleavage of NAD(+) into ADP-D-ribose (ADPR) and nicotinamide; NAD(+) cleavage triggering a defense system that promotes cell death. In Vitis rotundifolia (Muscadine grape), this protein is Disease resistance protein RPV1.